Reading from the N-terminus, the 415-residue chain is Casein kinase 1-like protein 3 (415 aa).

Residues 9–277 (YKLGRKIGGG…FLKRLFRDLF (269 aa)) form the Protein kinase domain. ATP-binding positions include 15–23 (IGGGSFGEI) and Lys38. Asp128 acts as the Proton acceptor in catalysis. Polar residues-rich tracts occupy residues 303–314 (NQSQAVPGSSNP) and 373–415 (NMPS…SPEK). Disordered regions lie at residues 303 to 330 (NQSQ…GPNI) and 344 to 415 (NAIG…SPEK).

Belongs to the protein kinase superfamily. CK1 Ser/Thr protein kinase family. Casein kinase I subfamily. Slightly autophosphorylated. As to expression, expressed in seedlings, stems, leaves and flowers.

It is found in the cytoplasm. Its subcellular location is the nucleus. It catalyses the reaction L-seryl-[protein] + ATP = O-phospho-L-seryl-[protein] + ADP + H(+). The enzyme catalyses L-threonyl-[protein] + ATP = O-phospho-L-threonyl-[protein] + ADP + H(+). Its function is as follows. Protein kinase involved in blue light responses (e.g. hypocotyl elongation and flowering) by phosphorylating CRY2 to reduce its stability. The polypeptide is Casein kinase 1-like protein 3 (Arabidopsis thaliana (Mouse-ear cress)).